A 212-amino-acid polypeptide reads, in one-letter code: DNA-directed RNA polymerase III subunit RPC8 (212 aa).

A Phosphoserine modification is found at serine 162. Positions 166–184 (RELEERAQLENEIEGKNEE) are enriched in basic and acidic residues. Residues 166–194 (RELEERAQLENEIEGKNEETPQNEKPPAY) are disordered.

Belongs to the eukaryotic RPB7/RPC8 RNA polymerase subunit family. In terms of assembly, component of the RNA polymerase III (Pol III) complex consisting of 17 subunits. RPC25/RPC8 and RPC17/RPC9 form a Pol III subcomplex.

The protein localises to the nucleus. Its function is as follows. DNA-dependent RNA polymerase catalyzes the transcription of DNA into RNA using the four ribonucleoside triphosphates as substrates. Specific peripheric component of RNA polymerase III which synthesizes small RNAs, such as 5S rRNA and tRNA. The RPC25/RPC8-RPC17/RPC9 subcomplex may bind Pol III transcripts emerging from the adjacent exit pore during elongation. This chain is DNA-directed RNA polymerase III subunit RPC8 (RPC25), found in Saccharomyces cerevisiae (strain ATCC 204508 / S288c) (Baker's yeast).